A 90-amino-acid chain; its full sequence is Large ribosomal subunit protein bL27 (90 aa).

Positions 1 to 22 are disordered; it reads MAHKKSGGSSSNGRDSAGRRLG.

It belongs to the bacterial ribosomal protein bL27 family.

The protein is Large ribosomal subunit protein bL27 of Caulobacter sp. (strain K31).